The following is a 204-amino-acid chain: Glideosome-associated protein 45 (204 aa).

A disordered region spans residues 1-86 (MGNKCSRSKV…KEEIDYATQE (86 aa)). G2 is lipidated: N-myristoyl glycine. Positions 2–29 (GNKCSRSKVKEPKRKDIDELAERENLKK) are targets GAP45 to the cell membrane; however, dispensable for the formation of the glideosome complex and the association with the inner membrane complex. Basic and acidic residues predominate over residues 9–53 (KVKEPKRKDIDELAERENLKKQSEEIIEEKPEEVVEQVEETHEEP). The span at 54–73 (LEQEQELDEQKIEEEEEEPE) shows a compositional bias: acidic residues. S89 is modified (phosphoserine; by CPK10). Residue S103 is modified to Phosphoserine; by CPK10 and PKB. A Phosphoserine; by CPK10 modification is found at S149.

In terms of assembly, component of the glideosome complex composed of GAP50, GAP45, MTIP and MyoA; the complex is formed during the late schizont stage and in merozoites. MyoA, MTIP and GAP45 probably form an initial complex in the cytoplasm which is then recruited to the outer face of the inner membrane complex via the interaction with GAP50. Interacts with GAP50; the interaction is independent of GAP45 phosphorylation status and can also occur independently of the formation of the glideosome complex. Phosphorylated at multiple sites. Phosphorylation increases during the schizont stage and peaks in segmented merozoites. May be phosphorylated by PKB. In schizonts, phosphorylated at Ser-89 and Ser-149 in response to phospholipase C-mediated calcium release. Phosphorylation at Ser-149 begins in early schizonts while phosphorylation at Ser-103 begins in late schizonts. Phosphorylation at Ser-89, Ser-103 and Ser-149 appears to be dispensable for GAP45 inner membrane complex localization or GAP45 inclusion in the glideosome complex. Phosphorylation is not required for interaction with GAP50; however, it may regulate the interaction with MTIP and MyoA. In terms of processing, N-myristoylated by NMT. N-myristoylation may contribute to the targeting of GAP45 to the inner membrane complex with the subsequent palmitoylation strengthening the interaction with the membrane. Post-translationally, palmitoylated. Palmitoylation appears to follow N-myristoylation and may strengthen the interaction with the inner membrane complex.

Its subcellular location is the inner membrane complex. Its function is as follows. Component of the glideosome complex, an inner membrane complex structure involved in parasite gliding motility and host cell invasion. During the asexual blood stage, required in schizonts to recruit MTIP and MyoA to the inner membrane complex where they assemble with GAP50 to form the glideosome complex. By regulating the formation of the glideosome, plays an essential role during merozoite invasion of host erythrocytes. This is Glideosome-associated protein 45 from Plasmodium falciparum (isolate 3D7).